The following is a 79-amino-acid chain: Small ribosomal subunit protein uS17 (79 aa).

Belongs to the universal ribosomal protein uS17 family. Part of the 30S ribosomal subunit.

One of the primary rRNA binding proteins, it binds specifically to the 5'-end of 16S ribosomal RNA. The polypeptide is Small ribosomal subunit protein uS17 (Mesorhizobium japonicum (strain LMG 29417 / CECT 9101 / MAFF 303099) (Mesorhizobium loti (strain MAFF 303099))).